A 302-amino-acid chain; its full sequence is MRLIFMGSPDFSVPVLEALHAHHEVVCVYCQPPRPAGRGKKDRPTPVQTRAEELGLPVRHPTSLRTPEAQAEFAALGAEAAVVVAYGLILPQPILDAPERGCLNIHASLLPRWRGAAPIHRAILAGDEETGICIMQMEAGLDTGPVLMCEKTHIGPEETVQDLHDRLSDMGARLILGALGALDDLVPCPQPDAGVTYAEKIAKAEAGIDWTRPATEIDRQIRGLSPFPGAWTLLNGERVKLLRCRLAEGHGAPGAVLGGLTIACGTGAVEITLAQREGKRPMEPEEFLRGFPLPEGSRAHTS.

108–111 (SLLP) is a (6S)-5,6,7,8-tetrahydrofolate binding site. Basic and acidic residues predominate over residues 279–288 (KRPMEPEEFL). The tract at residues 279-302 (KRPMEPEEFLRGFPLPEGSRAHTS) is disordered.

The protein belongs to the Fmt family.

It carries out the reaction L-methionyl-tRNA(fMet) + (6R)-10-formyltetrahydrofolate = N-formyl-L-methionyl-tRNA(fMet) + (6S)-5,6,7,8-tetrahydrofolate + H(+). Functionally, attaches a formyl group to the free amino group of methionyl-tRNA(fMet). The formyl group appears to play a dual role in the initiator identity of N-formylmethionyl-tRNA by promoting its recognition by IF2 and preventing the misappropriation of this tRNA by the elongation apparatus. This chain is Methionyl-tRNA formyltransferase, found in Cereibacter sphaeroides (strain ATCC 17023 / DSM 158 / JCM 6121 / CCUG 31486 / LMG 2827 / NBRC 12203 / NCIMB 8253 / ATH 2.4.1.) (Rhodobacter sphaeroides).